Consider the following 387-residue polypeptide: Phosphoglycerate kinase (387 aa).

Substrate-binding positions include 21-23, Arg36, 59-62, Arg113, and Arg146; these read DLN and HLGR. ATP is bound by residues Lys197, Glu314, and 340–343; that span reads GGDT.

This sequence belongs to the phosphoglycerate kinase family. Monomer.

It localises to the cytoplasm. It carries out the reaction (2R)-3-phosphoglycerate + ATP = (2R)-3-phospho-glyceroyl phosphate + ADP. The protein operates within carbohydrate degradation; glycolysis; pyruvate from D-glyceraldehyde 3-phosphate: step 2/5. This Cronobacter sakazakii (strain ATCC BAA-894) (Enterobacter sakazakii) protein is Phosphoglycerate kinase.